The sequence spans 367 residues: Alanine racemase (367 aa).

K40 acts as the Proton acceptor; specific for D-alanine in catalysis. K40 is modified (N6-(pyridoxal phosphate)lysine). R136 provides a ligand contact to substrate. Y263 (proton acceptor; specific for L-alanine) is an active-site residue. A substrate-binding site is contributed by M310.

It belongs to the alanine racemase family. It depends on pyridoxal 5'-phosphate as a cofactor.

It catalyses the reaction L-alanine = D-alanine. It functions in the pathway amino-acid biosynthesis; D-alanine biosynthesis; D-alanine from L-alanine: step 1/1. Functionally, catalyzes the interconversion of L-alanine and D-alanine. May also act on other amino acids. This is Alanine racemase (alr) from Lactococcus lactis subsp. lactis (strain IL1403) (Streptococcus lactis).